A 227-amino-acid polypeptide reads, in one-letter code: Urease accessory protein UreF (227 aa).

The protein belongs to the UreF family. In terms of assembly, ureD, UreF and UreG form a complex that acts as a GTP-hydrolysis-dependent molecular chaperone, activating the urease apoprotein by helping to assemble the nickel containing metallocenter of UreC. The UreE protein probably delivers the nickel.

Its subcellular location is the cytoplasm. Functionally, required for maturation of urease via the functional incorporation of the urease nickel metallocenter. The protein is Urease accessory protein UreF of Actinobacillus pleuropneumoniae (Haemophilus pleuropneumoniae).